Here is a 418-residue protein sequence, read N- to C-terminus: GTPase Obg (418 aa).

One can recognise an Obg domain in the interval 1–156 (MKFIDEITLN…KKLTLVLKVL (156 aa)). Positions 157–324 (ADVGFVGKPS…LKEALWQSVK (168 aa)) constitute an OBG-type G domain. GTP-binding positions include 163 to 170 (GKPSAGKS), 188 to 192 (FTTLV), 209 to 212 (DLPG), 278 to 281 (NKKD), and 305 to 307 (SAL). Mg(2+)-binding residues include S170 and T190. The region spanning 339-417 (VFINFEADFN…IYDYEFVWGN (79 aa)) is the OCT domain.

The protein belongs to the TRAFAC class OBG-HflX-like GTPase superfamily. OBG GTPase family. As to quaternary structure, monomer. Mg(2+) is required as a cofactor.

It localises to the cytoplasm. Functionally, an essential GTPase which binds GTP, GDP and possibly (p)ppGpp with moderate affinity, with high nucleotide exchange rates and a fairly low GTP hydrolysis rate. Plays a role in control of the cell cycle, stress response, ribosome biogenesis and in those bacteria that undergo differentiation, in morphogenesis control. The chain is GTPase Obg from Mycoplasmopsis pulmonis (strain UAB CTIP) (Mycoplasma pulmonis).